We begin with the raw amino-acid sequence, 446 residues long: tRNA-2-methylthio-N(6)-dimethylallyladenosine synthase (446 aa).

The MTTase N-terminal domain maps to 3–124 (KKLYIKTYGC…LPELISKVVR (122 aa)). Residues Cys-12, Cys-48, Cys-87, Cys-162, Cys-166, and Cys-169 each coordinate [4Fe-4S] cluster. In terms of domain architecture, Radical SAM core spans 148 to 380 (YPQGASSFIS…QKELAAQQLA (233 aa)). Residues 383–446 (ESCIGSTMKV…LNSLSGEIYR (64 aa)) enclose the TRAM domain.

This sequence belongs to the methylthiotransferase family. MiaB subfamily. Monomer. [4Fe-4S] cluster serves as cofactor.

It is found in the cytoplasm. It catalyses the reaction N(6)-dimethylallyladenosine(37) in tRNA + (sulfur carrier)-SH + AH2 + 2 S-adenosyl-L-methionine = 2-methylsulfanyl-N(6)-dimethylallyladenosine(37) in tRNA + (sulfur carrier)-H + 5'-deoxyadenosine + L-methionine + A + S-adenosyl-L-homocysteine + 2 H(+). Its function is as follows. Catalyzes the methylthiolation of N6-(dimethylallyl)adenosine (i(6)A), leading to the formation of 2-methylthio-N6-(dimethylallyl)adenosine (ms(2)i(6)A) at position 37 in tRNAs that read codons beginning with uridine. The chain is tRNA-2-methylthio-N(6)-dimethylallyladenosine synthase from Rickettsia bellii (strain RML369-C).